The sequence spans 295 residues: Enolase-phosphatase E1 (295 aa).

Positions 20 and 22 each coordinate Mg(2+). Substrate contacts are provided by residues 153–154 (SS) and K187. D212 is a Mg(2+) binding site. The disordered stretch occupies residues 260–295 (ETKEENGGATNGKRKIEETNDDVAEEDKAQVYPNKK).

Belongs to the HAD-like hydrolase superfamily. MasA/MtnC family. As to quaternary structure, monomer. Mg(2+) is required as a cofactor.

It is found in the cytoplasm. Its subcellular location is the nucleus. The catalysed reaction is 5-methylsulfanyl-2,3-dioxopentyl phosphate + H2O = 1,2-dihydroxy-5-(methylsulfanyl)pent-1-en-3-one + phosphate. It functions in the pathway amino-acid biosynthesis; L-methionine biosynthesis via salvage pathway; L-methionine from S-methyl-5-thio-alpha-D-ribose 1-phosphate: step 3/6. The protein operates within amino-acid biosynthesis; L-methionine biosynthesis via salvage pathway; L-methionine from S-methyl-5-thio-alpha-D-ribose 1-phosphate: step 4/6. In terms of biological role, bifunctional enzyme that catalyzes the enolization of 2,3-diketo-5-methylthiopentyl-1-phosphate (DK-MTP-1-P) into the intermediate 2-hydroxy-3-keto-5-methylthiopentenyl-1-phosphate (HK-MTPenyl-1-P), which is then dephosphorylated to form the acireductone 1,2-dihydroxy-3-keto-5-methylthiopentene (DHK-MTPene). The polypeptide is Enolase-phosphatase E1 (Anopheles gambiae (African malaria mosquito)).